The chain runs to 116 residues: MFQLDFDFKDLSRWDNFYRVYKAIHELSMICKPVVKETHKGYHIYCDIELSPEKIMNLRYYFGDDIWRIMYDEQRMIFAPHLFDVLYQEKEVFTITPHGIHVDENYHEYDVTDKVL.

This is an uncharacterized protein from Acidianus filamentous virus 2 (isolate Italy/Pozzuoli) (AFV-2).